A 356-amino-acid polypeptide reads, in one-letter code: Nucleotide-binding protein GDI1189/Gdia_1902 (356 aa).

20–27 is a binding site for ATP; sequence GLSGAGKS. Residue 65-68 coordinates GTP; it reads DSRT. The tract at residues 285–313 is disordered; it reads EPGGTCDSPGKPAHIEKGAAPTDVQSGGA.

Belongs to the RapZ-like family.

Functionally, displays ATPase and GTPase activities. The chain is Nucleotide-binding protein GDI1189/Gdia_1902 from Gluconacetobacter diazotrophicus (strain ATCC 49037 / DSM 5601 / CCUG 37298 / CIP 103539 / LMG 7603 / PAl5).